The following is a 193-amino-acid chain: BH3-interacting domain death agonist (193 aa).

Residues 87–101 carry the BH3 motif; that stretch reads IAAQLAEIGDQLDKQ.

In terms of assembly, forms heterodimers either with the pro-apoptotic protein BAX or the anti-apoptotic protein Bcl-2.

It localises to the cytoplasm. The protein localises to the mitochondrion outer membrane. In terms of biological role, induces caspases and apoptosis. Counters the protective effect of Bcl-2. The sequence is that of BH3-interacting domain death agonist (BID) from Gallus gallus (Chicken).